Consider the following 314-residue polypeptide: Protoheme IX farnesyltransferase 2 (314 aa).

The next 9 membrane-spanning stretches (helical) occupy residues 32–49 (VMSL…AAPV), 54–76 (LLAV…LNMW), 98–118 (IQPH…VMTL), 120–140 (VLVN…YAVV), 153–173 (IVIG…AVTG), 180–200 (IVLF…LALF), 226–246 (IFAY…LGYT), 249–269 (FYGV…WKVL), and 285–305 (FAYS…DSVV).

The protein belongs to the UbiA prenyltransferase family. Protoheme IX farnesyltransferase subfamily.

Its subcellular location is the cell inner membrane. It catalyses the reaction heme b + (2E,6E)-farnesyl diphosphate + H2O = Fe(II)-heme o + diphosphate. It participates in porphyrin-containing compound metabolism; heme O biosynthesis; heme O from protoheme: step 1/1. In terms of biological role, converts heme B (protoheme IX) to heme O by substitution of the vinyl group on carbon 2 of heme B porphyrin ring with a hydroxyethyl farnesyl side group. The chain is Protoheme IX farnesyltransferase 2 from Mesorhizobium japonicum (strain LMG 29417 / CECT 9101 / MAFF 303099) (Mesorhizobium loti (strain MAFF 303099)).